The primary structure comprises 508 residues: ATP synthase subunit alpha, chloroplastic (508 aa).

172–179 (GDRQTGKT) contacts ATP.

Belongs to the ATPase alpha/beta chains family. F-type ATPases have 2 components, CF(1) - the catalytic core - and CF(0) - the membrane proton channel. CF(1) has five subunits: alpha(3), beta(3), gamma(1), delta(1), epsilon(1). CF(0) has four main subunits: a, b, b' and c.

It localises to the plastid. It is found in the chloroplast thylakoid membrane. The catalysed reaction is ATP + H2O + 4 H(+)(in) = ADP + phosphate + 5 H(+)(out). Produces ATP from ADP in the presence of a proton gradient across the membrane. The alpha chain is a regulatory subunit. This Angiopteris evecta (Mule's foot fern) protein is ATP synthase subunit alpha, chloroplastic.